Reading from the N-terminus, the 460-residue chain is Putative type II methyltransferase M.OihORF3336P (460 aa).

The region spanning 15–458 (PEVVDLFSGC…EAMKKNIQGG (444 aa)) is the SAM-dependent MTase C5-type domain. Cys97 is a catalytic residue.

Belongs to the class I-like SAM-binding methyltransferase superfamily. C5-methyltransferase family.

It catalyses the reaction a 2'-deoxycytidine in DNA + S-adenosyl-L-methionine = a 5-methyl-2'-deoxycytidine in DNA + S-adenosyl-L-homocysteine + H(+). A methylase, recognizes the double-stranded sequence 5'-ACCGGT-3', methylates C-? on both strands. No endonuclease has been identified for this methylase. The sequence is that of Putative type II methyltransferase M.OihORF3336P from Oceanobacillus iheyensis (strain DSM 14371 / CIP 107618 / JCM 11309 / KCTC 3954 / HTE831).